The primary structure comprises 236 residues: 2-C-methyl-D-erythritol 4-phosphate cytidylyltransferase (236 aa).

This sequence belongs to the IspD/TarI cytidylyltransferase family. IspD subfamily. Homodimer.

The catalysed reaction is 2-C-methyl-D-erythritol 4-phosphate + CTP + H(+) = 4-CDP-2-C-methyl-D-erythritol + diphosphate. Its pathway is isoprenoid biosynthesis; isopentenyl diphosphate biosynthesis via DXP pathway; isopentenyl diphosphate from 1-deoxy-D-xylulose 5-phosphate: step 2/6. In terms of biological role, catalyzes the formation of 4-diphosphocytidyl-2-C-methyl-D-erythritol from CTP and 2-C-methyl-D-erythritol 4-phosphate (MEP). The polypeptide is 2-C-methyl-D-erythritol 4-phosphate cytidylyltransferase (Salmonella arizonae (strain ATCC BAA-731 / CDC346-86 / RSK2980)).